A 230-amino-acid chain; its full sequence is Small ribosomal subunit protein uS3 (230 aa).

The 69-residue stretch at 39 to 107 (VRNYLRQKLA…PIHVNIEEIR (69 aa)) folds into the KH type-2 domain. Residues 210–230 (SSKPEHESKQRKAGRRNAAAN) form a disordered region.

The protein belongs to the universal ribosomal protein uS3 family. As to quaternary structure, part of the 30S ribosomal subunit. Forms a tight complex with proteins S10 and S14.

Functionally, binds the lower part of the 30S subunit head. Binds mRNA in the 70S ribosome, positioning it for translation. The sequence is that of Small ribosomal subunit protein uS3 from Neisseria gonorrhoeae (strain ATCC 700825 / FA 1090).